Here is a 281-residue protein sequence, read N- to C-terminus: Ribosomal protein L11 methyltransferase (281 aa).

S-adenosyl-L-methionine is bound by residues Thr-133, Gly-154, Asp-175, and Asn-216.

This sequence belongs to the methyltransferase superfamily. PrmA family.

Its subcellular location is the cytoplasm. The enzyme catalyses L-lysyl-[protein] + 3 S-adenosyl-L-methionine = N(6),N(6),N(6)-trimethyl-L-lysyl-[protein] + 3 S-adenosyl-L-homocysteine + 3 H(+). Its function is as follows. Methylates ribosomal protein L11. The protein is Ribosomal protein L11 methyltransferase of Campylobacter jejuni subsp. jejuni serotype O:23/36 (strain 81-176).